We begin with the raw amino-acid sequence, 360 residues long: S-adenosylmethionine-dependent nucleotide dehydratase RSAD2 (360 aa).

Residues Lys-44–Pro-71 are disordered. Basic and acidic residues predominate over residues Val-49–Pro-63. Positions Pro-68–Leu-288 constitute a Radical SAM core domain. Cys-82, Cys-86, and Cys-89 together coordinate [4Fe-4S] cluster. Lys-196 is subject to N6-acetyllysine. Lys-205 participates in a covalent cross-link: Glycyl lysine isopeptide (Lys-Gly) (interchain with G-Cter in ubiquitin).

The protein belongs to the radical SAM superfamily. RSAD2 family. Homodimer. Interacts with IRAK1 and TRAF6. Interacts with FPPS. Interacts with HADHB. Interacts (via C-terminus) with VAPA/VAP33 (via C-terminus). It depends on [4Fe-4S] cluster as a cofactor. Acetylated by HAT1. HAT1-mediated acetylation of Lys-196 in turn recruits UBE4A that stimulates RSAD2 polyubiquitination leading to proteasomal degradation. In terms of processing, 'Lys-6'-linked polyubiquitination at Lys-205 leads to RSAD2 protein degradation. In terms of tissue distribution, in neonatal rat tibia, specifically localized in cells of the periosteum, in osteoblasts lining endosteal and peristeal bone surfaces, to articular surfaces of cartilage and in perichondral cells but not in chondrocytes (at protein level). Expressed predominantly in bone marrow and spleen.

The protein localises to the endoplasmic reticulum membrane. Its subcellular location is the golgi apparatus. It localises to the endoplasmic reticulum. It is found in the lipid droplet. The protein resides in the mitochondrion. The protein localises to the mitochondrion inner membrane. Its subcellular location is the mitochondrion outer membrane. It catalyses the reaction CTP + AH2 + S-adenosyl-L-methionine = 3'-deoxy-3',4'-didehydro-CTP + 5'-deoxyadenosine + L-methionine + A + H2O + H(+). Its activity is regulated as follows. IRAK1 and TRAF6 synergistically activate RSAD2 increasing its activity with CTP as substrate about 10-fold. Functionally, interferon-inducible antiviral protein which plays a major role in the cell antiviral state induced by type I and type II interferon. Catalyzes the conversion of cytidine triphosphate (CTP) to 3'-deoxy-3',4'-didehydro-CTP (ddhCTP) via a SAM-dependent radical mechanism. In turn, ddhCTP acts as a chain terminator for the RNA-dependent RNA polymerases from multiple viruses and directly inhibits viral replication. Therefore, inhibits a wide range of DNA and RNA viruses. Also promotes TLR7 and TLR9-dependent production of IFN-beta production in plasmacytoid dendritic cells (pDCs) by facilitating 'Lys-63'-linked ubiquitination of IRAK1 by TRAF6. Plays a role in CD4+ T-cells activation and differentiation. Facilitates T-cell receptor (TCR)-mediated GATA3 activation and optimal T-helper 2 (Th2) cytokine production by modulating NFKB1 and JUNB activities. Can inhibit secretion of soluble proteins. This is S-adenosylmethionine-dependent nucleotide dehydratase RSAD2 from Rattus norvegicus (Rat).